Reading from the N-terminus, the 564-residue chain is NAD-dependent malic enzyme (564 aa).

Catalysis depends on Tyr-102, which acts as the Proton donor. Arg-155 contacts NAD(+). The active-site Proton acceptor is the Lys-173. Residues Glu-244, Asp-245, and Asp-268 each coordinate a divalent metal cation. Residues Asp-268 and Asn-417 each coordinate NAD(+).

It belongs to the malic enzymes family. As to quaternary structure, homotetramer. It depends on Mg(2+) as a cofactor. Mn(2+) serves as cofactor.

It carries out the reaction (S)-malate + NAD(+) = pyruvate + CO2 + NADH. The enzyme catalyses oxaloacetate + H(+) = pyruvate + CO2. In Pseudomonas aeruginosa (strain UCBPP-PA14), this protein is NAD-dependent malic enzyme.